Reading from the N-terminus, the 204-residue chain is Urease accessory protein UreG (204 aa).

12-19 (GPVGSGKT) is a binding site for GTP.

This sequence belongs to the SIMIBI class G3E GTPase family. UreG subfamily. Homodimer. UreD, UreF and UreG form a complex that acts as a GTP-hydrolysis-dependent molecular chaperone, activating the urease apoprotein by helping to assemble the nickel containing metallocenter of UreC. The UreE protein probably delivers the nickel.

Its subcellular location is the cytoplasm. Facilitates the functional incorporation of the urease nickel metallocenter. This process requires GTP hydrolysis, probably effectuated by UreG. The polypeptide is Urease accessory protein UreG (Hahella chejuensis (strain KCTC 2396)).